We begin with the raw amino-acid sequence, 194 residues long: Ribosome maturation factor RimM (194 aa).

The 82-residue stretch at 113–194 folds into the PRC barrel domain; the sequence is DGEYYWIDLI…RIVADWGLDY (82 aa).

It belongs to the RimM family. Binds ribosomal protein uS19.

It localises to the cytoplasm. Its function is as follows. An accessory protein needed during the final step in the assembly of 30S ribosomal subunit, possibly for assembly of the head region. Essential for efficient processing of 16S rRNA. May be needed both before and after RbfA during the maturation of 16S rRNA. It has affinity for free ribosomal 30S subunits but not for 70S ribosomes. The sequence is that of Ribosome maturation factor RimM from Leptothrix cholodnii (strain ATCC 51168 / LMG 8142 / SP-6) (Leptothrix discophora (strain SP-6)).